A 37-amino-acid polypeptide reads, in one-letter code: Large ribosomal subunit protein bL36 (37 aa).

Belongs to the bacterial ribosomal protein bL36 family.

This Janthinobacterium sp. (strain Marseille) (Minibacterium massiliensis) protein is Large ribosomal subunit protein bL36.